Consider the following 221-residue polypeptide: Iron-sulfur cluster repair protein YtfE (221 aa).

This sequence belongs to the RIC family. YtfE subfamily. Homodimer.

The protein resides in the cytoplasm. Functionally, di-iron-containing protein involved in the repair of iron-sulfur clusters damaged by oxidative and nitrosative stress conditions. This Edwardsiella ictaluri (strain 93-146) protein is Iron-sulfur cluster repair protein YtfE.